The following is a 100-amino-acid chain: MRTPMLLALLALATLCLAGRADAKPGDAESGKGAAFVSKQEGSEVVKRLRRYLDHWLGAPAPYPDPLEPKREVCELNPDCDELADHIGFQEAYRRFYGPV.

A signal peptide spans 1–23 (MRTPMLLALLALATLCLAGRADA). A propeptide spanning residues 24 to 51 (KPGDAESGKGAAFVSKQEGSEVVKRLRR) is cleaved from the precursor. The Gla domain occupies 52-98 (YLDHWLGAPAPYPDPLEPKREVCELNPDCDELADHIGFQEAYRRFYG). P60 is modified (4-hydroxyproline). Residues E68, E72, E75, and D81 each contribute to the Ca(2+) site. 4-carboxyglutamate is present on residues E68, E72, and E75. C74 and C80 are oxidised to a cystine.

It belongs to the osteocalcin/matrix Gla protein family. In terms of processing, gamma-carboxyglutamate residues are formed by vitamin K dependent carboxylation by GGCX. These residues are essential for the binding of calcium. Decarboxylation promotes the hormone activity.

The protein resides in the secreted. The carboxylated form is one of the main organic components of the bone matrix, which constitutes 1-2% of the total bone protein. It acts as a negative regulator of bone formation and is required to limit bone formation without impairing bone resorption or mineralization. The carboxylated form binds strongly to apatite and calcium. Functionally, the uncarboxylated form acts as a hormone secreted by osteoblasts, which regulates different cellular processes, such as energy metabolism, male fertility and brain development. Regulates of energy metabolism by acting as a hormone favoring pancreatic beta-cell proliferation, insulin secretion and sensitivity and energy expenditure. Uncarboxylated osteocalcin hormone also promotes testosterone production in the testes: acts as a ligand for G protein-coupled receptor GPRC6A at the surface of Leydig cells, initiating a signaling response that promotes the expression of enzymes required for testosterone synthesis in a CREB-dependent manner. Also acts as a regulator of brain development: osteocalcin hormone crosses the blood-brain barrier and acts as a ligand for GPR158 on neurons, initiating a signaling response that prevents neuronal apoptosis in the hippocampus, favors the synthesis of all monoamine neurotransmitters and inhibits that of gamma-aminobutyric acid (GABA). Osteocalcin also crosses the placenta during pregnancy and maternal osteocalcin is required for fetal brain development. The polypeptide is Osteocalcin (BGLAP) (Bos taurus (Bovine)).